Consider the following 235-residue polypeptide: Probable septum site-determining protein MinC (235 aa).

Residues Lys-104–Pro-125 are disordered. Over residues Pro-110–Pro-119 the composition is skewed to pro residues.

It belongs to the MinC family. In terms of assembly, interacts with MinD and FtsZ.

Its function is as follows. Cell division inhibitor that blocks the formation of polar Z ring septums. Rapidly oscillates between the poles of the cell to destabilize FtsZ filaments that have formed before they mature into polar Z rings. Prevents FtsZ polymerization. This Salmonella agona (strain SL483) protein is Probable septum site-determining protein MinC.